The following is a 110-amino-acid chain: NADH-quinone oxidoreductase subunit K (110 aa).

Transmembrane regions (helical) follow at residues 13–33 (VTHG…GIII), 38–58 (ILIL…NFLI), and 70–90 (VFVF…LAIV).

This sequence belongs to the complex I subunit 4L family. NDH-1 is composed of 14 different subunits. Subunits NuoA, H, J, K, L, M, N constitute the membrane sector of the complex.

It is found in the cell inner membrane. The catalysed reaction is a quinone + NADH + 5 H(+)(in) = a quinol + NAD(+) + 4 H(+)(out). Its function is as follows. NDH-1 shuttles electrons from NADH, via FMN and iron-sulfur (Fe-S) centers, to quinones in the respiratory chain. The immediate electron acceptor for the enzyme in this species is believed to be ubiquinone. Couples the redox reaction to proton translocation (for every two electrons transferred, four hydrogen ions are translocated across the cytoplasmic membrane), and thus conserves the redox energy in a proton gradient. In Francisella tularensis subsp. tularensis (strain FSC 198), this protein is NADH-quinone oxidoreductase subunit K.